Here is a 646-residue protein sequence, read N- to C-terminus: 1-deoxy-D-xylulose-5-phosphate synthase (646 aa).

Residues H86 and 127–129 (AHS) each bind thiamine diphosphate. D158 is a binding site for Mg(2+). Thiamine diphosphate is bound by residues 159–160 (GA), N188, Y295, and E377. N188 serves as a coordination point for Mg(2+).

It belongs to the transketolase family. DXPS subfamily. In terms of assembly, homodimer. Requires Mg(2+) as cofactor. Thiamine diphosphate is required as a cofactor.

It carries out the reaction D-glyceraldehyde 3-phosphate + pyruvate + H(+) = 1-deoxy-D-xylulose 5-phosphate + CO2. The protein operates within metabolic intermediate biosynthesis; 1-deoxy-D-xylulose 5-phosphate biosynthesis; 1-deoxy-D-xylulose 5-phosphate from D-glyceraldehyde 3-phosphate and pyruvate: step 1/1. Its function is as follows. Catalyzes the acyloin condensation reaction between C atoms 2 and 3 of pyruvate and glyceraldehyde 3-phosphate to yield 1-deoxy-D-xylulose-5-phosphate (DXP). The polypeptide is 1-deoxy-D-xylulose-5-phosphate synthase (Burkholderia cenocepacia (strain HI2424)).